Consider the following 247-residue polypeptide: Trypsin-4 (247 aa).

Residues 1–15 form the signal peptide; that stretch reads MKISIFFAFLGAAVA. Residues 16–23 constitute a propeptide, activation peptide; the sequence is LPVNDDDK. The 222-residue stretch at 24–245 folds into the Peptidase S1 domain; the sequence is IVGGYTCPKH…YLSWIQETMA (222 aa). 6 disulfide bridges follow: cysteine 30–cysteine 161, cysteine 49–cysteine 65, cysteine 133–cysteine 234, cysteine 140–cysteine 207, cysteine 172–cysteine 186, and cysteine 197–cysteine 221. Histidine 64 serves as the catalytic Charge relay system. Ca(2+)-binding residues include glutamate 76, asparagine 78, valine 81, and glutamate 86. Catalysis depends on aspartate 108, which acts as the Charge relay system. Serine 201 (charge relay system) is an active-site residue.

It belongs to the peptidase S1 family. Ca(2+) serves as cofactor. In terms of processing, proteolytically cleaved and activated by an autocatalytic mechanism. Cleavage by CTRC inhibits autoactivation.

Its subcellular location is the secreted. It is found in the extracellular space. The catalysed reaction is Preferential cleavage: Arg-|-Xaa, Lys-|-Xaa.. Its activity is regulated as follows. Activated by autocatalytic cleavage. Cleavage by CTRC inhibits autoactivation. Its function is as follows. Serine protease capable of autoactivation. The polypeptide is Trypsin-4 (Rattus norvegicus (Rat)).